We begin with the raw amino-acid sequence, 1133 residues long: MGMFNCLHGNNMSGQHDIPPEVGEQPEQEPLEAPGAAAPGAGAGPAEEMATEPDSEPSNNEPVPDETGSEISGPPEDSKSDIQSPCQAFEEVRVGGDYSPPPEEAMPFETQQPSLGDFWPTLEQPGPSGTPSGLQAFNPAILEPGTPTGASPGLGAYTPPPEEAMPFEFNEPAQGDHSQPPLQVPDLAPGGPEALVPRALPAEPGNIRFENAGFREDYSPPPEESVPFQVGGEEFGGDSPPPGLPRVIPQIGIGGEFPTVAVPSALCLAPAENAPPLWVRGAIDRPFREAVRSPPNFACDSPPMEITRPLLEIGRASIGVDDDTAVNMDSPPIASDGPPIEVSGAPDKSECAERPPVEREAAEMEGSPTTATAVEGKVPSPERGDGSSTQPEAMDAKPAPAAQAVSTGSDAGAPTDSAMLTDSQSDAGEDGTAPGTPSDLQSDPEELEEAPAVRADPDGGAAPVAPATPAESESEGSRDPAAEPASEAVPATTAESASGAAPVTQVEPAAAAVSATLAEPAARAAPITPKEPTTRAVPSARAHPAAGAVPGAPAMSASARAAAARAAYAGPLVWGARSLSATPAARASLPARAAAAARAASAARAVAAGRSASAAPSRAHLRPPSPEIQVADPPTPRPPPRPTAWPDKYERGRSCCRYEASSGICEIESSSDESEEGATGCFQWLLRRNRRPGLPRSHTVGSNPVRNFFTRAFGSCFGLSECTRSRSLSPGKAKDPMEERRKQMRKEAIEMREQKRADKKRSKLIDKQLEEEKMDYMCTHRLLLLGAGESGKSTIVKQMRILHVNGFNGEGGEEDPQAARSNSDGEKATKVQDIKNNLKEAIETIVAAMSNLVPPVELANPENQFRVDYILSVMNVPNFDFPPEFYEHAKALWEDEGVRACYERSNEYQLIDCAQYFLDKIDVIKQADYVPSDQDLLRCRVLTSGIFETKFQVDKVNFHMFDVGGQRDERRKWIQCFNDVTAIIFVVASSSYNMVIREDNQTNRLQEALNLFKSIWNNRWLRTISVILFLNKQDLLAEKVLAGKSKIEDYFPEFARYTTPEDATPEPGEDPRVTRAKYFIRDEFLRISTASGDGRHYCYPHFTCAVDTENIRRVFNDCRDIIQRMHLRQYELL.

Disordered regions lie at residues 1-195 (MGMF…PEAL), 322-552 (DDTA…VPGA), 611-648 (SASA…WPDK), and 724-744 (RSRS…RKQM). Residues 31 to 48 (LEAPGAAAPGAGAGPAEE) show a composition bias toward low complexity. Residues 347-362 (DKSECAERPPVEREAA) show a composition bias toward basic and acidic residues. Composition is skewed to low complexity over residues 391-404 (PEAM…AAQA), 459-471 (GGAA…TPAE), 482-498 (AEPA…ESAS), 515-525 (ATLAEPAARAA), and 535-552 (RAVP…VPGA). Positions 633–643 (PPTPRPPPRPT) are enriched in pro residues. The segment covering 732–744 (KAKDPMEERRKQM) has biased composition (basic and acidic residues). The stretch at 737–761 (MEERRKQMRKEAIEMREQKRADKKR) forms a coiled coil. The G-alpha domain occupies 778-1133 (CTHRLLLLGA…RMHLRQYELL (356 aa)). The interval 781-794 (RLLLLGAGESGKST) is G1 motif. Residue 786–794 (GAGESGKST) coordinates GTP. S793 is a Mg(2+) binding site. A disordered region spans residues 807–828 (FNGEGGEEDPQAARSNSDGEKA). The interval 935–943 (DLLRCRVLT) is G2 motif. Residues 936-943 (LLRCRVLT), 962-966 (DVGGQ), and 1031-1034 (NKQD) each bind GTP. R940 bears the ADP-ribosylarginine; by cholera toxin mark. T943 provides a ligand contact to Mg(2+). Residues 958 to 967 (FHMFDVGGQR) are G3 motif. The segment at 1027–1034 (ILFLNKQD) is G4 motif. The residue at position 1091 (S1091) is a Phosphoserine. The tract at residues 1103–1108 (TCAVDT) is G5 motif. A1105 provides a ligand contact to GTP.

It belongs to the G-alpha family. G(s) subfamily. As to quaternary structure, g proteins are composed of 3 units; alpha, beta and gamma. The alpha chain contains the guanine nucleotide binding site. Interacts through its N-terminal region with ALEX which is produced from the same locus in a different open reading frame. This interaction may inhibit its adenylyl cyclase-stimulating activity. Interacts with MAGED2.

The protein resides in the cell membrane. The protein localises to the apical cell membrane. The catalysed reaction is GTP + H2O = GDP + phosphate + H(+). Guanine nucleotide-binding proteins (G proteins) function as transducers in numerous signaling pathways controlled by G protein-coupled receptors (GPCRs). The alpha chain contains the guanine nucleotide binding site and alternates between an active, GTP-bound state and an inactive, GDP-bound state. Signaling by an activated GPCR promotes GDP release and GTP binding. The alpha subunit has a low GTPase activity that converts bound GTP to GDP, thereby terminating the signal. Both GDP release and GTP hydrolysis are modulated by numerous regulatory proteins. Signaling involves the activation of adenylyl cyclases, resulting in increased levels of the signaling molecule cAMP. GNAS functions downstream of several GPCRs, including beta-adrenergic receptors. XLas isoforms interact with the same set of receptors as Gnas isoforms. The polypeptide is Guanine nucleotide-binding protein G(s) subunit alpha isoforms XLas (Mus musculus (Mouse)).